The following is a 396-amino-acid chain: Argininosuccinate synthase (396 aa).

ATP contacts are provided by residues 10 to 18 (AYSGGLDTS) and alanine 37. The L-citrulline site is built by tyrosine 88 and serine 93. Glycine 118 contacts ATP. The L-aspartate site is built by threonine 120, asparagine 124, and aspartate 125. An L-citrulline-binding site is contributed by asparagine 124. Residues arginine 128, serine 176, serine 185, glutamate 261, and tyrosine 273 each contribute to the L-citrulline site.

This sequence belongs to the argininosuccinate synthase family. Type 1 subfamily. As to quaternary structure, homotetramer.

Its subcellular location is the cytoplasm. It carries out the reaction L-citrulline + L-aspartate + ATP = 2-(N(omega)-L-arginino)succinate + AMP + diphosphate + H(+). It participates in amino-acid biosynthesis; L-arginine biosynthesis; L-arginine from L-ornithine and carbamoyl phosphate: step 2/3. This is Argininosuccinate synthase from Nitratidesulfovibrio vulgaris (strain ATCC 29579 / DSM 644 / CCUG 34227 / NCIMB 8303 / VKM B-1760 / Hildenborough) (Desulfovibrio vulgaris).